The following is a 59-amino-acid chain: uncharacterized protein (59 aa).

This is an uncharacterized protein from Saccharomyces cerevisiae (strain ATCC 204508 / S288c) (Baker's yeast).